The chain runs to 370 residues: Alanine racemase (370 aa).

Residue lysine 39 is the Proton acceptor; specific for D-alanine of the active site. Lysine 39 carries the N6-(pyridoxal phosphate)lysine modification. Arginine 137 contacts substrate. Residue tyrosine 258 is the Proton acceptor; specific for L-alanine of the active site. Methionine 306 is a substrate binding site.

Belongs to the alanine racemase family. Pyridoxal 5'-phosphate serves as cofactor.

The catalysed reaction is L-alanine = D-alanine. It participates in amino-acid biosynthesis; D-alanine biosynthesis; D-alanine from L-alanine: step 1/1. Functionally, catalyzes the interconversion of L-alanine and D-alanine. May also act on other amino acids. In Methylobacterium nodulans (strain LMG 21967 / CNCM I-2342 / ORS 2060), this protein is Alanine racemase (alr).